Reading from the N-terminus, the 266-residue chain is Metallo-beta-lactamase VIM-2 (266 aa).

The N-terminal stretch at 1 to 20 (MFKLLSKLLVYLTASIMAIA) is a signal peptide. Zn(2+)-binding residues include His-114, His-116, and Cys-198.

It belongs to the metallo-beta-lactamase superfamily. Class-B beta-lactamase family. Monomer. Requires Zn(2+) as cofactor.

It localises to the periplasm. The catalysed reaction is a beta-lactam + H2O = a substituted beta-amino acid. Its activity is regulated as follows. Inhibited by chelating agents such as EDTA. Inhibited by a fungal natural product, aspergillomarasmine A (AMA). Inhibited by 2-triazolylthioacetamides. In terms of biological role, class B beta-lactamase which confers resistance to the beta-lactam antibiotics, including penicillins, cephalosporins and carbapenems. Acts via hydrolysis of the beta-lactam ring. Has penicillin-, cephalosporin- and carbapenem-hydrolyzing activities. The chain is Metallo-beta-lactamase VIM-2 from Escherichia coli.